Consider the following 250-residue polypeptide: Ubiquinone/menaquinone biosynthesis C-methyltransferase UbiE (250 aa).

S-adenosyl-L-methionine-binding positions include T73, D94, 122–123 (NA), and S139.

It belongs to the class I-like SAM-binding methyltransferase superfamily. MenG/UbiE family.

It carries out the reaction a 2-demethylmenaquinol + S-adenosyl-L-methionine = a menaquinol + S-adenosyl-L-homocysteine + H(+). It catalyses the reaction a 2-methoxy-6-(all-trans-polyprenyl)benzene-1,4-diol + S-adenosyl-L-methionine = a 5-methoxy-2-methyl-3-(all-trans-polyprenyl)benzene-1,4-diol + S-adenosyl-L-homocysteine + H(+). Its pathway is quinol/quinone metabolism; menaquinone biosynthesis; menaquinol from 1,4-dihydroxy-2-naphthoate: step 2/2. It participates in cofactor biosynthesis; ubiquinone biosynthesis. Its function is as follows. Methyltransferase required for the conversion of demethylmenaquinol (DMKH2) to menaquinol (MKH2) and the conversion of 2-polyprenyl-6-methoxy-1,4-benzoquinol (DDMQH2) to 2-polyprenyl-3-methyl-6-methoxy-1,4-benzoquinol (DMQH2). This Francisella tularensis subsp. holarctica (strain FTNF002-00 / FTA) protein is Ubiquinone/menaquinone biosynthesis C-methyltransferase UbiE.